Here is a 345-residue protein sequence, read N- to C-terminus: GDP-mannose transporter (345 aa).

At 1–8 (MDNHMLNR) the chain is on the cytoplasmic side. The chain crosses the membrane as a helical span at residues 9–29 (ISKSPILPVVSYCMASILMTL). Topologically, residues 30 to 40 (TNKYVLSSPGY) are lumenal. A helical membrane pass occupies residues 41–61 (NMNFLLLTVQSTVCVAAIGIL). The Cytoplasmic portion of the chain corresponds to 62-78 (KRLKVINYRDFDFREAK). The chain crosses the membrane as a helical span at residues 79 to 101 (FWFPISFLLVAMIYTASKALQFL). Over 102 to 104 (SVP) the chain is Lumenal. Residues 105-127 (VYTIFKNLTIIIIAYGEVLWFGG) traverse the membrane as a helical segment. Residues 128-131 (HVTA) lie on the Cytoplasmic side of the membrane. A helical transmembrane segment spans residues 132–150 (LTLFSFGLMVLSSIVAAWA). Residues 151–161 (DIQSSSFASQT) lie on the Lumenal side of the membrane. Residues 162-182 (LNSGYLWMVLNCLTNAAFVLA) form a helical membrane-spanning segment. Over 183 to 194 (MRKRIKLTNFRD) the chain is Cytoplasmic. A helical membrane pass occupies residues 195–215 (FDTMFYNNLLSIPVLVICTLF). Residues 216-233 (TEDWSAENIAQNFPPDAK) lie on the Lumenal side of the membrane. The helical transmembrane segment at 234 to 254 (FGVLMAMAISGVSSVGISYTS) threads the bilayer. The Cytoplasmic segment spans residues 255–264 (AWCVRVTSST). Residues 265-285 (TYSMVGALNKLPLAIAGLVFF) form a helical membrane-spanning segment. The Lumenal segment spans residues 286 to 288 (DAP). Residues 289 to 309 (ITFGSVTAILLGFISGVVYAV) traverse the membrane as a helical segment. Residues 310 to 345 (AKSQQQRQKDPATILPMTHNPVSASSQSMRDSLSKS) are Cytoplasmic-facing. The segment at 319-345 (DPATILPMTHNPVSASSQSMRDSLSKS) is disordered. Positions 329-345 (NPVSASSQSMRDSLSKS) are enriched in polar residues.

Belongs to the TPT transporter family. SLC35D subfamily. In terms of assembly, homooligomer.

The protein localises to the golgi apparatus membrane. It localises to the cytoplasmic vesicle membrane. Its subcellular location is the endoplasmic reticulum membrane. Functionally, involved in the import of GDP-mannose from the cytoplasm into the Golgi lumen. The sequence is that of GDP-mannose transporter (vrg4) from Schizosaccharomyces pombe (strain 972 / ATCC 24843) (Fission yeast).